The following is a 1178-amino-acid chain: DNA-directed RNA polymerase subunit beta' (1178 aa).

Positions 60, 62, 75, and 78 each coordinate Zn(2+). Mg(2+) contacts are provided by D450, D452, and D454. Residues C795, C869, C876, and C879 each contribute to the Zn(2+) site.

Belongs to the RNA polymerase beta' chain family. The RNAP catalytic core consists of 2 alpha, 1 beta, 1 beta' and 1 omega subunit. When a sigma factor is associated with the core the holoenzyme is formed, which can initiate transcription. It depends on Mg(2+) as a cofactor. Zn(2+) is required as a cofactor.

The catalysed reaction is RNA(n) + a ribonucleoside 5'-triphosphate = RNA(n+1) + diphosphate. DNA-dependent RNA polymerase catalyzes the transcription of DNA into RNA using the four ribonucleoside triphosphates as substrates. The polypeptide is DNA-directed RNA polymerase subunit beta' (Clostridium botulinum (strain ATCC 19397 / Type A)).